A 185-amino-acid polypeptide reads, in one-letter code: Ribosome-recycling factor (185 aa).

The protein belongs to the RRF family.

Its subcellular location is the cytoplasm. Functionally, responsible for the release of ribosomes from messenger RNA at the termination of protein biosynthesis. May increase the efficiency of translation by recycling ribosomes from one round of translation to another. In Streptococcus pneumoniae serotype 19F (strain G54), this protein is Ribosome-recycling factor.